We begin with the raw amino-acid sequence, 396 residues long: Elongation factor Tu (396 aa).

The tr-type G domain maps to 10-205 (KPHVNIGTIG…AVDSYIPTPE (196 aa)). Residues 19–26 (GHVDHGKT) form a G1 region. A GTP-binding site is contributed by 19–26 (GHVDHGKT). Thr26 contacts Mg(2+). Residues 60-64 (GITIN) are G2. A G3 region spans residues 81–84 (DCPG). Residues 81-85 (DCPGH) and 136-139 (NKCD) each bind GTP. A G4 region spans residues 136–139 (NKCD). Residues 174–176 (SAK) are G5.

This sequence belongs to the TRAFAC class translation factor GTPase superfamily. Classic translation factor GTPase family. EF-Tu/EF-1A subfamily. In terms of assembly, monomer.

Its subcellular location is the cytoplasm. It carries out the reaction GTP + H2O = GDP + phosphate + H(+). GTP hydrolase that promotes the GTP-dependent binding of aminoacyl-tRNA to the A-site of ribosomes during protein biosynthesis. This Brevibacillus brevis (strain 47 / JCM 6285 / NBRC 100599) protein is Elongation factor Tu.